The chain runs to 72 residues: Gas vesicle protein A (72 aa).

Belongs to the gas vesicle GvpA family. The gas vesicle shell is 2 nm thick and consists of a single layer of this protein. It forms helical ribs nearly perpendicular to the long axis of the vesicle.

It is found in the gas vesicle shell. In terms of biological role, gas vesicles are hollow, gas filled proteinaceous nanostructures found in some microorganisms. During planktonic growth they allow positioning of the organism at a favorable depth for light or nutrient acquisition. GvpA forms the protein shell. This is Gas vesicle protein A from Geotalea uraniireducens (strain Rf4) (Geobacter uraniireducens).